The chain runs to 285 residues: Tropomyosin (285 aa).

A coiled-coil region spans residues 1-273 (MDAIKKKMQA…KEKYREIGDD (273 aa)).

Belongs to the tropomyosin family. In terms of assembly, homodimer.

In terms of biological role, tropomyosin, in association with the troponin complex, plays a central role in the calcium dependent regulation of muscle contraction. This chain is Tropomyosin, found in Chironomus kiiensis (Midge).